We begin with the raw amino-acid sequence, 617 residues long: 1-deoxy-D-xylulose-5-phosphate synthase (617 aa).

Thiamine diphosphate is bound by residues His-76 and 117 to 119; that span reads GHS. Asp-148 serves as a coordination point for Mg(2+). Thiamine diphosphate-binding positions include 149-150, Asn-177, Tyr-285, and Glu-366; that span reads GA. Asn-177 contributes to the Mg(2+) binding site.

Belongs to the transketolase family. DXPS subfamily. As to quaternary structure, homodimer. Mg(2+) serves as cofactor. It depends on thiamine diphosphate as a cofactor.

The enzyme catalyses D-glyceraldehyde 3-phosphate + pyruvate + H(+) = 1-deoxy-D-xylulose 5-phosphate + CO2. It functions in the pathway metabolic intermediate biosynthesis; 1-deoxy-D-xylulose 5-phosphate biosynthesis; 1-deoxy-D-xylulose 5-phosphate from D-glyceraldehyde 3-phosphate and pyruvate: step 1/1. In terms of biological role, catalyzes the acyloin condensation reaction between C atoms 2 and 3 of pyruvate and glyceraldehyde 3-phosphate to yield 1-deoxy-D-xylulose-5-phosphate (DXP). The protein is 1-deoxy-D-xylulose-5-phosphate synthase of Mannheimia succiniciproducens (strain KCTC 0769BP / MBEL55E).